The primary structure comprises 407 residues: Accessory Sec system protein translocase subunit SecY2 (407 aa).

The next 10 membrane-spanning stretches (helical) occupy residues 13–33 (FLWTLLFVFIYVLGSKLTLPF), 65–85 (FFSIGLAPWMSSILIWQMFTV), 104–124 (MLLTLAIALIQSLGLVLNLPL), 133–153 (GTIVFLDTLILIAGTYFLIWL), 158–178 (SSMGLGGSIMIVMVSMISYIP), 192–212 (PLILALIGFFSLCFLYLAVLV), 248–268 (IMYAMTLVSIPQYFLMLLLFF), 287–307 (IPWFILYLLTIFILAWAFAFI), 345–365 (FAFVGALYLVLVAGLPMLLIF), and 370–390 (YMRLGMIPGMFMIFIGMVFSI).

This sequence belongs to the SecY/SEC61-alpha family. SecY2 subfamily. May form heterotrimers with SecE and SecG subunits (Potential). Component of the accessory SecA2/SecY2 protein translocase complex required to export cell wall protein GspB.

Its subcellular location is the cell membrane. The central subunit of a protein translocation channel (Potential). Part of the accessory SecA2/SecY2 system specifically required to export GspB, a serine-rich repeat cell wall protein encoded upstream in the same operon. This Streptococcus gordonii protein is Accessory Sec system protein translocase subunit SecY2.